A 359-amino-acid polypeptide reads, in one-letter code: 4-galactosyl-N-acetylglucosaminide 3-alpha-L-fucosyltransferase 9 (359 aa).

At 1–11 (MTSASKGILRP) the chain is on the cytoplasmic side. A helical; Signal-anchor for type II membrane protein transmembrane segment spans residues 12 to 32 (FLIVCIILGCFMACLLIYIKP). Over 33-359 (TNSWIFSPME…VGNLEKWFWN (327 aa)) the chain is Lumenal. N-linked (GlcNAc...) asparagine glycosylation is present at Asn-62. Residues 63–168 (ETTILIWVWP…RRDSDIQVPY (106 aa)) form an acceptor-binding region. Gln-75 provides a ligand contact to a beta-D-galactosyl-(1-&gt;4)-N-acetyl-beta-D-glucosaminyl derivative. Disulfide bonds link Cys-82/Cys-335, Cys-91/Cys-338, and Cys-190/Cys-238. N-linked (GlcNAc...) asparagine glycosylation occurs at Asn-101. Residue Glu-137 coordinates a beta-D-galactosyl-(1-&gt;4)-N-acetyl-beta-D-glucosaminyl derivative. Catalysis depends on Glu-137, which acts as the Nucleophile. Glu-137 serves as a coordination point for GDP-beta-L-fucose. N-linked (GlcNAc...) asparagine glycosylation occurs at Asn-153. Positions 168, 192, 194, 195, 202, 226, 241, 246, 252, 255, and 256 each coordinate GDP-beta-L-fucose. The tract at residues 169–326 (GFLTVSTNPF…NWRKDFTVNL (158 aa)) is donor-binding. Residues 327-359 (PRFWESHACLACDHVKRHQEYKSVGNLEKWFWN) form an acceptor-binding region.

The protein belongs to the glycosyltransferase 10 family. In terms of assembly, homodimer. Post-translationally, N-glycosylated with complex-type N-glycans.

The protein localises to the golgi apparatus. It is found in the trans-Golgi network membrane. It localises to the golgi apparatus membrane. The enzyme catalyses a beta-D-galactosyl-(1-&gt;4)-N-acetyl-beta-D-glucosaminyl derivative + GDP-beta-L-fucose = a beta-D-galactosyl-(1-&gt;4)-[alpha-L-fucosyl-(1-&gt;3)]-N-acetyl-beta-D-glucosaminyl derivative + GDP + H(+). It catalyses the reaction an alpha-Neu5Ac-(2-&gt;3)-beta-D-Gal-(1-&gt;4)-beta-D-GlcNAc-(1-&gt;3)-beta-D-Gal-(1-&gt;4)-beta-D-GlcNAc derivative + GDP-beta-L-fucose = an alpha-Neu5Ac-(2-&gt;3)-beta-D-Gal-(1-&gt;4)-beta-D-GlcNAc-(1-&gt;3)-beta-D-Gal-(1-&gt;4)-[alpha-L-Fuc-(1-&gt;3)]-beta-D-GlcNAc derivative + GDP + H(+). It carries out the reaction alpha-N-glycoloylneuraminosyl-(2-&gt;3)-beta-D-galactosyl-(1-&gt;4)-N-acetyl-beta-D-glucosaminyl-(1-&gt;3)-beta-D-galactosyl-(1-&gt;4)-N-acetyl-beta-D-glucosaminyl-(1-&gt;3)-beta-D-galactosyl-(1-&gt;4)-beta-D-glucosyl-(1&lt;-&gt;1')-ceramide + GDP-beta-L-fucose = alpha-N-glycoloylneuraminosyl-(2-&gt;3)-beta-D-galactosyl-(1-&gt;4)-N-acetyl-beta-D-glucosaminyl-(1-&gt;3)-beta-D-galactosyl-(1-&gt;4)-[alpha-L-fucosyl-(1-&gt;3)]-N-acetyl-beta-D-glucosaminyl-(1-&gt;3)-beta-D-galactosyl-(1-&gt;4)-beta-D-glucosyl-(1&lt;-&gt;1')-ceramide + GDP + H(+). The catalysed reaction is alpha-D-galactosyl-(1-&gt;3)-beta-D-galactosyl-(1-&gt;4)-N-acetyl-beta-D-glucosaminyl-(1-&gt;3)-beta-D-galactosyl-(1-&gt;4)-beta-D-glucosyl-(1&lt;-&gt;1')-ceramide + GDP-beta-L-fucose = a neolactoside IV(3)-alpha-Gal,III(3)-alpha-Fuc-nLc4Cer + GDP + H(+). The enzyme catalyses a neolactoside nLc4Cer + GDP-beta-L-fucose = a neolactoside III(3)-alpha-Fuc-nLc4Cer + GDP + H(+). It catalyses the reaction an N-acetyl-alpha-neuraminyl-(2-&gt;3)-beta-D-galactosyl-(1-&gt;4)-N-acetyl-beta-D-glucosaminyl derivative + GDP-beta-L-fucose = an alpha-Neu5Ac-(2-&gt;3)-beta-D-Gal-(1-&gt;4)-[alpha-L-Fuc-(1-&gt;3)]-beta-D-GlcNAc derivative + GDP + H(+). It carries out the reaction beta-D-Gal-(1-&gt;4)-beta-D-GlcNAc-(1-&gt;3)-beta-D-Gal-(1-&gt;4)-D-Glc + GDP-beta-L-fucose = beta-D-Gal-(1-&gt;4)-[alpha-L-Fuc-(1-&gt;3)]-beta-D-GlcNAc-(1-&gt;3)-beta-D-Gal-(1-&gt;4)-D-Glc + GDP + H(+). The catalysed reaction is an alpha-L-Fuc-(1-&gt;2)-beta-D-Gal-(1-&gt;4)-beta-D-GlcNAc derivative + GDP-beta-L-fucose = an alpha-L-Fuc-(1-&gt;2)-beta-D-Gal-(1-&gt;4)-[alpha-L-Fuc-(1-&gt;3)]-beta-D-GlcNAc derivative + GDP + H(+). It functions in the pathway protein modification; protein glycosylation. The protein operates within glycolipid biosynthesis. Activated by Mn2+. Catalyzes alpha(1-&gt;3) linkage of fucosyl moiety transferred from GDP-beta-L-fucose to N-acetyl glucosamine (GlcNAc) within type 2 lactosamine (LacNAc, beta-D-Gal-(1-&gt;4)-beta-D-GlcNAc-) glycan attached to glycolipids and N- or O-linked glycoproteins. Fucosylates distal type 2 LacNAc and its fucosylated (H-type 2 LacNAc) and sialylated (sialyl-type 2 LacNAc) derivatives to form Lewis x (Lex) (CD15) and Lewis y (Ley) antigenic epitopes involved in cell adhesion and differentiation. Generates Lex epitopes in the brain, presumably playing a role in the maintenance of neuronal stemness and neurite outgrowth in progenitor neural cells. Fucosylates the internal type 2 LacNAc unit of the polylactosamine chain to form VIM-2 antigen that serves as recognition epitope for SELE. Can also modify milk oligosaccharides in particular type 2 tetrasaccharide LNnT. In Canis lupus familiaris (Dog), this protein is 4-galactosyl-N-acetylglucosaminide 3-alpha-L-fucosyltransferase 9.